A 333-amino-acid chain; its full sequence is Eukaryotic translation initiation factor 2 subunit 2 (333 aa).

Disordered regions lie at residues 1-119 (MSGD…DLDI) and 139-164 (ILEKDEALEDEDNKKDDGISFSNQTG). At Ser2 the chain carries N-acetylserine. 2 positions are modified to phosphoserine: Ser2 and Ser13. Basic residues predominate over residues 13-22 (SKKKKKKKKP). Phosphothreonine is present on residues Thr31 and Thr36. Basic and acidic residues predominate over residues 40–51 (ETKEVEPEPTED). Ser67 carries the phosphoserine modification. Residues 96–105 (EGVKDLKIES) are compositionally biased toward basic and acidic residues. Residue Lys102 forms a Glycyl lysine isopeptide (Lys-Gly) (interchain with G-Cter in SUMO2) linkage. Ser105 is subject to Phosphoserine. 2 stretches are compositionally biased toward acidic residues: residues 106-118 (DVQEPTEPEDDLD) and 139-149 (ILEKDEALEDE). Phosphothreonine is present on Thr111. Phosphoserine is present on residues Ser158 and Ser218. N6-acetyllysine is present on residues Lys265 and Lys293. The C4-type zinc-finger motif lies at 281-305 (CHTCRSPDTILQKDTRLYFLQCETC).

Belongs to the eIF-2-beta/eIF-5 family. In terms of assembly, eukaryotic translation initiation factor 2 eIF2 is a heterotrimeric complex composed of an alpha (EIF2S1), a beta (EIF2S2) and a gamma (EIF2S3) chain. eIF2 is member of the 43S pre-initiation complex (43S PIC). eIF2 forms a complex with at least CELF1/CUGBP1, CALR, CALR3, EIF2S1, EIF2S2, HSP90B1 and HSPA5. Interacts with BZW2/5MP1. Interacts with EIF5.

It is found in the cytoplasm. It localises to the cytosol. Functionally, component of the eIF2 complex that functions in the early steps of protein synthesis by forming a ternary complex with GTP and initiator tRNA. This complex binds to a 40S ribosomal subunit, followed by mRNA binding to form the 43S pre-initiation complex (43S PIC). Junction of the 60S ribosomal subunit to form the 80S initiation complex is preceded by hydrolysis of the GTP bound to eIF2 and release of an eIF2-GDP binary complex. In order for eIF2 to recycle and catalyze another round of initiation, the GDP bound to eIF2 must exchange with GTP by way of a reaction catalyzed by eIF2B. The chain is Eukaryotic translation initiation factor 2 subunit 2 (EIF2S2) from Pongo abelii (Sumatran orangutan).